We begin with the raw amino-acid sequence, 275 residues long: Lectin (275 aa).

An N-terminal signal peptide occupies residues 1–30; the sequence is MASLQTQMISFYLIFLSILLTTIFFFKVNS. 2 residues coordinate D-glucose: D111 and G129. Residues E149 and D151 each coordinate Mn(2+). D151, F153, N155, and D159 together coordinate Ca(2+). Positions 159 and 166 each coordinate Mn(2+). The propeptide occupies 211-217; sequence NSLEEEN. G246 and A247 together coordinate D-glucose. The propeptide occupies 270–275; sequence KQAADA.

Belongs to the leguminous lectin family. Heterotetramer of two alpha and two beta chains. The mature form consists of two chains, alpha and beta, produced by cleavage of the immature protein. These remain cleaved, yet fold together to form one subunit.

D-mannose specific lectin. This chain is Lectin, found in Lens culinaris (Lentil).